A 288-amino-acid polypeptide reads, in one-letter code: Large ribosomal subunit protein uL2 (288 aa).

Disordered regions lie at residues 1–46 (MAIH…RNVY) and 226–288 (MVMN…RGKK). A compositionally biased stretch (gly residues) spans 235–248 (NGGGQGKSKGGGGR). Residues 279–288 (HNGRKPRGKK) show a composition bias toward basic residues.

It belongs to the universal ribosomal protein uL2 family. Part of the 50S ribosomal subunit. Forms a bridge to the 30S subunit in the 70S ribosome.

Its function is as follows. One of the primary rRNA binding proteins. Required for association of the 30S and 50S subunits to form the 70S ribosome, for tRNA binding and peptide bond formation. It has been suggested to have peptidyltransferase activity; this is somewhat controversial. Makes several contacts with the 16S rRNA in the 70S ribosome. This chain is Large ribosomal subunit protein uL2, found in Opitutus terrae (strain DSM 11246 / JCM 15787 / PB90-1).